We begin with the raw amino-acid sequence, 231 residues long: NADH-quinone oxidoreductase subunit C (231 aa).

This sequence belongs to the complex I 30 kDa subunit family. In terms of assembly, NDH-1 is composed of 14 different subunits. Subunits NuoB, C, D, E, F, and G constitute the peripheral sector of the complex.

The protein localises to the cell membrane. The enzyme catalyses a quinone + NADH + 5 H(+)(in) = a quinol + NAD(+) + 4 H(+)(out). Functionally, NDH-1 shuttles electrons from NADH, via FMN and iron-sulfur (Fe-S) centers, to quinones in the respiratory chain. The immediate electron acceptor for the enzyme in this species is believed to be a menaquinone. Couples the redox reaction to proton translocation (for every two electrons transferred, four hydrogen ions are translocated across the cytoplasmic membrane), and thus conserves the redox energy in a proton gradient. In Mycobacterium sp. (strain JLS), this protein is NADH-quinone oxidoreductase subunit C.